We begin with the raw amino-acid sequence, 389 residues long: Ecto-ADP-ribosyltransferase 3 (389 aa).

The first 26 residues, 1 to 26 (MKTGHFEIVTMLLATMILVDIFQVKA), serve as a signal peptide directing secretion. Cys-43 and Cys-256 are joined by a disulfide. The TR mART core domain occupies 64–251 (QQLDTVWENA…LILQSINKTC (188 aa)). NAD(+)-binding residues include Tyr-101 and Arg-163. Asn-248 is a glycosylation site (N-linked (GlcNAc...) asparagine). 3 repeat units span residues 283–292 (GEKNQKLEDH), 293–302 (SEKNWKLEDH), and 303–312 (GEKNQKLEDH). Residues 283 to 312 (GEKNQKLEDHSEKNWKLEDHGEKNQKLEDH) are 3 X 10 AA tandem repeats of [GS]-E-K-N-[QW]-K-L-E-D-H. Positions 325-362 (MKIPEPFPLPEDKSQGNINNPTPGPVPVPGPKSHPSAS) are disordered. Residue Thr-346 is glycosylated (O-linked (GalNAc...) threonine). Residues 346–356 (TPGPVPVPGPK) are compositionally biased toward pro residues. The GPI-anchor amidated serine moiety is linked to residue Ser-362. Residues 363–389 (SGKLLLPQFGMVIILISVSAINLFVAL) constitute a propeptide, removed in mature form.

The protein belongs to the Arg-specific ADP-ribosyltransferase family. Post-translationally, O-glycosylated with core 1 or possibly core 8 glycans. Testis specific.

Its subcellular location is the cell membrane. It catalyses the reaction L-arginyl-[protein] + NAD(+) = N(omega)-(ADP-D-ribosyl)-L-arginyl-[protein] + nicotinamide + H(+). This is Ecto-ADP-ribosyltransferase 3 (ART3) from Homo sapiens (Human).